Reading from the N-terminus, the 304-residue chain is N-acetylmuramic acid 6-phosphate etherase 1 (304 aa).

The span at 1–10 shows a compositional bias: polar residues; sequence MENSHLGSLT. The segment at 1–20 is disordered; it reads MENSHLGSLTTERRNERSKR. One can recognise an SIS domain in the interval 58-221; that stretch reads AVGSLKKGGR…STAAMIKMGK (164 aa). The active-site Proton donor is the E86. E117 is an active-site residue.

This sequence belongs to the GCKR-like family. MurNAc-6-P etherase subfamily. In terms of assembly, homodimer.

The catalysed reaction is N-acetyl-D-muramate 6-phosphate + H2O = N-acetyl-D-glucosamine 6-phosphate + (R)-lactate. The protein operates within amino-sugar metabolism; N-acetylmuramate degradation. Specifically catalyzes the cleavage of the D-lactyl ether substituent of MurNAc 6-phosphate, producing GlcNAc 6-phosphate and D-lactate. The chain is N-acetylmuramic acid 6-phosphate etherase 1 from Bacillus licheniformis (strain ATCC 14580 / DSM 13 / JCM 2505 / CCUG 7422 / NBRC 12200 / NCIMB 9375 / NCTC 10341 / NRRL NRS-1264 / Gibson 46).